We begin with the raw amino-acid sequence, 449 residues long: Probable D-serine dehydratase (449 aa).

Residue K119 is modified to N6-(pyridoxal phosphate)lysine.

This sequence belongs to the serine/threonine dehydratase family. DsdA subfamily. The cofactor is pyridoxal 5'-phosphate.

It carries out the reaction D-serine = pyruvate + NH4(+). The chain is Probable D-serine dehydratase from Pseudomonas putida (strain ATCC 700007 / DSM 6899 / JCM 31910 / BCRC 17059 / LMG 24140 / F1).